The sequence spans 235 residues: Transcription factor MYB59 (235 aa).

HTH myb-type domains lie at 5–57 and 58–112; these read QEEY…VNYL and HPGL…RKKA. A DNA-binding region (H-T-H motif) is located at residues 33–57; that stretch reads WDFVAKVSGLNRTGKSCRLRWVNYL. The short motif at 62–65 is the Bipartite nuclear localization signal 1 element; the sequence is KRGK. A DNA-binding region (H-T-H motif) is located at residues 85 to 108; it reads WSKIARKLPGRTDNEIKNYWRTHM. The Bipartite nuclear localization signal 2 motif lies at 109–117; that stretch reads RKKAQEKKR. The interval 109–147 is disordered; sequence RKKAQEKKRPMSPTSSSSNCCSSSMTTTTSQDTGGSNGK. Positions 119–138 are enriched in low complexity; the sequence is MSPTSSSSNCCSSSMTTTTS.

In terms of tissue distribution, mainly expressed in leaves and seedlings, and to a lower extent, in roots, stems and inflorescences. Isoform MYB59-1 and isoform MYB59-2 are present in roots, leaves, and seedlings, while the expression of isoform MYB59-3 and isoform MYB59-4 is confined to seedlings.

It localises to the nucleus. Functionally, transcription factor. The sequence is that of Transcription factor MYB59 (MYB59) from Arabidopsis thaliana (Mouse-ear cress).